The following is a 109-amino-acid chain: Non-structural protein NS-S (109 aa).

The protein belongs to the orthobunyavirus NS-S protein family.

In terms of biological role, inhibits host transcriptional machinery, by producing modifications to the phosphorylation state of the C-terminal domain (CTD) of RNA polymerase II. Inhibits phosphorylation at serine 2 in the heptapeptide repeat (YSPTSPS) of the CTD of RNA polymerase II, suggesting that the elongation step of transcription and/or 3'-end processing is prevented. Inhibition of host transcription machinery leads to shut off of host cell protein synthesis and inhibition of the host innate immune response. NSs also seems to be involved in the nuclear relocalization of host PABP1. This chain is Non-structural protein NS-S (N), found in Culex.